We begin with the raw amino-acid sequence, 623 residues long: Phosphomethylpyrimidine synthase (623 aa).

Substrate contacts are provided by residues Asn-221, Met-250, Tyr-279, His-315, Ser-335–Gly-337, Asp-376–Arg-379, and Glu-415. Residue His-419 coordinates Zn(2+). Tyr-442 is a binding site for substrate. His-483 contributes to the Zn(2+) binding site. [4Fe-4S] cluster-binding residues include Cys-563, Cys-566, and Cys-571.

The protein belongs to the ThiC family. In terms of assembly, homodimer. [4Fe-4S] cluster serves as cofactor.

It catalyses the reaction 5-amino-1-(5-phospho-beta-D-ribosyl)imidazole + S-adenosyl-L-methionine = 4-amino-2-methyl-5-(phosphooxymethyl)pyrimidine + CO + 5'-deoxyadenosine + formate + L-methionine + 3 H(+). It participates in cofactor biosynthesis; thiamine diphosphate biosynthesis. Its function is as follows. Catalyzes the synthesis of the hydroxymethylpyrimidine phosphate (HMP-P) moiety of thiamine from aminoimidazole ribotide (AIR) in a radical S-adenosyl-L-methionine (SAM)-dependent reaction. The chain is Phosphomethylpyrimidine synthase from Parvibaculum lavamentivorans (strain DS-1 / DSM 13023 / NCIMB 13966).